Consider the following 103-residue polypeptide: SOSS complex subunit C (103 aa).

It belongs to the SOSS-C family. In terms of assembly, belongs to the multiprotein complex Integrator. Component of the SOSS complex, composed of SOSS-B (SOSS-B1/NABP2 or SOSS-B2/NABP1), SOSS-A/INTS3 and SOSS-C/INIP.

It localises to the nucleus. Functionally, component of the SOSS complex, a multiprotein complex that functions downstream of the MRN complex to promote DNA repair and G2/M checkpoint. The SOSS complex associates with single-stranded DNA at DNA lesions and influences diverse endpoints in the cellular DNA damage response including cell-cycle checkpoint activation, recombinational repair and maintenance of genomic stability. Required for efficient homologous recombination-dependent repair of double-strand breaks (DSBs). The sequence is that of SOSS complex subunit C (INIP) from Gallus gallus (Chicken).